The primary structure comprises 215 residues: MOB kinase activator-like 1B (215 aa).

The segment at 1–29 (MSLFGLGSRNQKTFRPKKSAPTGSKGAQL) is disordered. 4 residues coordinate Zn(2+): Cys80, Cys85, His162, and His167.

The protein belongs to the MOB1/phocein family. As to expression, constitutively expressed with higher expression in roots, flowers and pods than in leaves and stems.

It is found in the cytoplasm. The protein resides in the cytoskeleton. It localises to the phragmoplast. This chain is MOB kinase activator-like 1B, found in Medicago sativa subsp. falcata (Sickle medic).